Here is a 168-residue protein sequence, read N- to C-terminus: Prespore-specific protein A (168 aa).

The N-terminal stretch at 1 to 19 is a signal peptide; sequence MKFQHTFIALLSLLTYANA. O-linked (GlcNAc) threonine glycans are attached at residues threonine 110, threonine 114, threonine 116, threonine 118, threonine 120, threonine 122, threonine 124, threonine 126, threonine 128, threonine 130, threonine 132, threonine 134, and threonine 138. A run of 3 repeats spans residues 116 to 119, 120 to 123, and 124 to 127. The interval 116-127 is 3 X 4 AA tandem repeats of T-P-T-V; sequence TPTVTPTVTPTV. Residues 116-131 are compositionally biased toward low complexity; that stretch reads TPTVTPTVTPTVTPTP. Residues 116 to 147 form a disordered region; that stretch reads TPTVTPTVTPTVTPTPTNTPNPTPSQTSTTTG. Serine 140 is a glycosylation site (O-linked (GlcNAc) serine). Glycine 147 is lipidated: GPI-like-anchor amidated glycine. Positions 148–168 are cleaved as a propeptide — removed in mature form; sequence SASTVVASLSLIIFSMILSLC.

It belongs to the ponticulin family. In terms of processing, O-glycosylated in the repeat region. The oligosaccharides contain N-acetylglucosamine and fucose as the major constituents. The GPI-like-anchor contains a phosphoceramide group, rather than a phosphatidyl group.

The protein localises to the cell membrane. May bind F-actin and nucleates actin assembly. The protein is Prespore-specific protein A (pspA) of Dictyostelium discoideum (Social amoeba).